The sequence spans 194 residues: Ribonuclease HII (194 aa).

An RNase H type-2 domain is found at 3 to 193 (ILTAGVDEAG…VRNLLAQQTL (191 aa)). Positions 9, 10, and 101 each coordinate a divalent metal cation.

Belongs to the RNase HII family. The cofactor is Mn(2+). Mg(2+) is required as a cofactor.

The protein resides in the cytoplasm. The enzyme catalyses Endonucleolytic cleavage to 5'-phosphomonoester.. Functionally, endonuclease that specifically degrades the RNA of RNA-DNA hybrids. In Neisseria meningitidis serogroup C (strain 053442), this protein is Ribonuclease HII.